We begin with the raw amino-acid sequence, 37 residues long: Chitinase-like protein (37 aa).

The segment at 1 to 20 (VLLSVGGDADTESPEKKNLG) is disordered. In terms of domain architecture, GH18 spans 1–37 (VLLSVGGDADTESPEKKNLGGVSIVDLSMDDFRGLLT).

It belongs to the glycosyl hydrolase 18 family. IDGF subfamily. In terms of processing, glycosylated.

The protein localises to the secreted. Cooperates with insulin-like peptides to stimulate the proliferation, polarization and motility of imaginal disk cells. May act by stabilizing the binding of insulin-like peptides to its receptor through a simultaneous interaction with both molecules to form a multiprotein signaling complex. This Heliothis virescens (Tobacco budworm moth) protein is Chitinase-like protein.